The sequence spans 485 residues: Glutamyl-tRNA(Gln) amidotransferase subunit A (485 aa).

Catalysis depends on charge relay system residues K75 and S150. The active-site Acyl-ester intermediate is the S174.

Belongs to the amidase family. GatA subfamily. Heterotrimer of A, B and C subunits.

It carries out the reaction L-glutamyl-tRNA(Gln) + L-glutamine + ATP + H2O = L-glutaminyl-tRNA(Gln) + L-glutamate + ADP + phosphate + H(+). Allows the formation of correctly charged Gln-tRNA(Gln) through the transamidation of misacylated Glu-tRNA(Gln) in organisms which lack glutaminyl-tRNA synthetase. The reaction takes place in the presence of glutamine and ATP through an activated gamma-phospho-Glu-tRNA(Gln). This chain is Glutamyl-tRNA(Gln) amidotransferase subunit A, found in Picosynechococcus sp. (strain ATCC 27264 / PCC 7002 / PR-6) (Agmenellum quadruplicatum).